Consider the following 496-residue polypeptide: Probable cytosol aminopeptidase (496 aa).

The Mn(2+) site is built by Lys266 and Asp271. The active site involves Lys278. Asp289, Asp348, and Glu350 together coordinate Mn(2+). Residue Arg352 is part of the active site.

It belongs to the peptidase M17 family. Requires Mn(2+) as cofactor.

Its subcellular location is the cytoplasm. The enzyme catalyses Release of an N-terminal amino acid, Xaa-|-Yaa-, in which Xaa is preferably Leu, but may be other amino acids including Pro although not Arg or Lys, and Yaa may be Pro. Amino acid amides and methyl esters are also readily hydrolyzed, but rates on arylamides are exceedingly low.. It carries out the reaction Release of an N-terminal amino acid, preferentially leucine, but not glutamic or aspartic acids.. Presumably involved in the processing and regular turnover of intracellular proteins. Catalyzes the removal of unsubstituted N-terminal amino acids from various peptides. In Pseudomonas syringae pv. syringae (strain B728a), this protein is Probable cytosol aminopeptidase.